Here is a 318-residue protein sequence, read N- to C-terminus: Curved DNA-binding protein (318 aa).

The J domain occupies 5-69; sequence DYYKILGVEP…QKRAEFDEIR (65 aa). A disordered region spans residues 111–130; it reads GGGNPFGGARQQQRSAGRRG.

It is found in the cytoplasm. It localises to the nucleoid. DNA-binding protein that preferentially recognizes a curved DNA sequence. It is probably a functional analog of DnaJ; displays overlapping activities with DnaJ, but functions under different conditions, probably acting as a molecular chaperone in an adaptive response to environmental stresses other than heat shock. Lacks autonomous chaperone activity; binds native substrates and targets them for recognition by DnaK. Its activity is inhibited by the binding of CbpM. The protein is Curved DNA-binding protein of Pseudomonas putida (strain GB-1).